Reading from the N-terminus, the 329-residue chain is Phenylalanine--tRNA ligase alpha subunit (329 aa).

Glu-253 provides a ligand contact to Mg(2+).

This sequence belongs to the class-II aminoacyl-tRNA synthetase family. Phe-tRNA synthetase alpha subunit type 1 subfamily. In terms of assembly, tetramer of two alpha and two beta subunits. Mg(2+) is required as a cofactor.

Its subcellular location is the cytoplasm. The enzyme catalyses tRNA(Phe) + L-phenylalanine + ATP = L-phenylalanyl-tRNA(Phe) + AMP + diphosphate + H(+). This is Phenylalanine--tRNA ligase alpha subunit from Coxiella burnetii (strain CbuK_Q154) (Coxiella burnetii (strain Q154)).